The primary structure comprises 377 residues: Putative efflux system component YknX (377 aa).

A helical membrane pass occupies residues 3 to 23; it reads KVWIGIGIAVIVALFVGINIY. Positions 95 to 187 form a coiled coil; that stretch reads TNEQLSLEKE…RVSDLEVKSE (93 aa).

The protein belongs to the membrane fusion protein (MFP) (TC 8.A.1) family. Part of a complex composed of YknX, YknY and YknZ. The complex interacts with YknW.

It is found in the cell membrane. Its function is as follows. Part of an unusual four-component transporter, which is required for protection against the killing factor SdpC (sporulation-delaying protein). The polypeptide is Putative efflux system component YknX (yknX) (Bacillus subtilis (strain 168)).